Here is a 123-residue protein sequence, read N- to C-terminus: Large ribosomal subunit protein uL14c (123 aa).

This sequence belongs to the universal ribosomal protein uL14 family. Part of the 50S ribosomal subunit.

The protein resides in the plastid. The protein localises to the chloroplast. Binds to 23S rRNA. In Saccharum hybrid (Sugarcane), this protein is Large ribosomal subunit protein uL14c.